Consider the following 919-residue polypeptide: Alpha-amylase (919 aa).

Positions 1 to 33 (MPATRRTARVRRVAAVTVTALAAALLPPLAARA) are cleaved as a signal peptide. Ca(2+) is bound by residues Asn182 and Asp281. Asp312 serves as the catalytic Nucleophile. His316 provides a ligand contact to Ca(2+). Glu346 (proton donor) is an active-site residue. The interval 704–729 (ASGRLHHRHPARRGGAHRRLPGPRGR) is disordered. Residues 707–724 (RLHHRHPARRGGAHRRLP) show a composition bias toward basic residues.

This sequence belongs to the glycosyl hydrolase 13 family. As to quaternary structure, monomer. Requires Ca(2+) as cofactor.

The protein resides in the secreted. It catalyses the reaction Endohydrolysis of (1-&gt;4)-alpha-D-glucosidic linkages in polysaccharides containing three or more (1-&gt;4)-alpha-linked D-glucose units.. The polypeptide is Alpha-amylase (amy) (Streptomyces lividans).